We begin with the raw amino-acid sequence, 176 residues long: NADH-dependent flavin reductase (176 aa).

FAD contacts are provided by residues 39-46 (EDSVHGMT) and 48-49 (NA). Serine 52 serves as a coordination point for NAD(+). FAD is bound by residues 63 to 65 (SIS), 69 to 70 (KM), and 95 to 96 (HF). NAD(+)-binding positions include histidine 137 and 157-160 (FYTG).

Belongs to the non-flavoprotein flavin reductase family. Homodimer. 4-nitrophenol 2-monooxygenase complex consists of an oxygenase component NphA1 and a flavin reductase component NphA2.

The catalysed reaction is a reduced flavin + NAD(+) = an oxidized flavin + NADH + 2 H(+). In terms of biological role, catalyzes the reduction of FAD with the concomitant oxidation of NADH. NAD is the physiological electron donor. Subsequently, the reduced flavins diffuse to the oxygenase component NphA2. The sequence is that of NADH-dependent flavin reductase (nphA2) from Rhodococcus sp.